The following is a 588-amino-acid chain: Protein disulfide-isomerase-like protein of the testis (588 aa).

A signal peptide spans 1–20 (MELLWTPLLLVAACLSEVLG). Residues Asn-55, Asn-157, and Asn-337 are each glycosylated (N-linked (GlcNAc...) asparagine). Residues 385-448 (PVKKLVGKNF…IAKIDITAND (64 aa)) enclose the Thioredoxin domain. 3 stretches are compositionally biased toward basic and acidic residues: residues 531 to 542 (IEDTSKQDRPVK), 549 to 567 (SIRKPEEPERRKETAEREA), and 574 to 588 (EQPKPERKLEVKEEL). The interval 531-588 (IEDTSKQDRPVKESPVLDSIRKPEEPERRKETAEREAAAAQPKEQPKPERKLEVKEEL) is disordered. The Prevents secretion from ER signature appears at 585–588 (KEEL).

This sequence belongs to the protein disulfide isomerase family. As to quaternary structure, homodimer. The homodimer is not disulfide-linked. Interacts with CLGN and ERO1A. Post-translationally, N-glycosylated. As to expression, testis-specific (at protein level).

It localises to the endoplasmic reticulum. In terms of biological role, probable redox-inactive chaperone involved in spermatogenesis. This chain is Protein disulfide-isomerase-like protein of the testis (Pdilt), found in Mus musculus (Mouse).